The chain runs to 285 residues: Trypsin Tyr p 3.0101 (285 aa).

Positions 1–16 are cleaved as a signal peptide; that stretch reads MKILLFLCFLVSVAFA. Positions 17-33 are excised as a propeptide; that stretch reads KPPTIQLKSNTKSQNGF. The Peptidase S1 domain maps to 34-262; the sequence is IVGGTEAVDG…YLDWIELSAK (229 aa). Cysteine 58 and cysteine 74 form a disulfide bridge. Catalysis depends on charge relay system residues histidine 73 and aspartate 120. Cystine bridges form between cysteine 186–cysteine 202 and cysteine 214–cysteine 238. Catalysis depends on serine 218, which acts as the Charge relay system.

This sequence belongs to the peptidase S1 family.

Its subcellular location is the secreted. It catalyses the reaction Preferential cleavage: Arg-|-Xaa, Lys-|-Xaa.. With respect to regulation, inhibited by the serine protease inhibitor phenylmethylsulfonyl, and trypsin inhibitors soybean trypsin inhibitor and tosyllysine chloromethyl ketone. Not inhibited by dithiothreitol, a cysteine protease inhibitor. Digests TAMe (p-toluene arginine methyl ester), but not ethyl N-benzoyl-L-tyrosinate (BTEE). The polypeptide is Trypsin Tyr p 3.0101 (Tyrophagus putrescentiae (Mold mite)).